A 58-amino-acid polypeptide reads, in one-letter code: Sperm histone P2b (58 aa).

Residues Leu20–His41 are disordered.

It belongs to the protamine P2 family. In terms of tissue distribution, testis.

Its subcellular location is the nucleus. The protein localises to the chromosome. Protamines substitute for histones in the chromatin of sperm during the haploid phase of spermatogenesis. They compact sperm DNA into a highly condensed, stable and inactive complex. The chain is Sperm histone P2b from Equus caballus (Horse).